The chain runs to 343 residues: E3 ubiquitin-protein ligase SP1 (343 aa).

A helical membrane pass occupies residues 1–21 (MIPWGGVTCCLSAAALYLLGR). Over 22 to 222 (SSGRDAEVLE…LISNLGKWSR (201 aa)) the chain is Chloroplast intermembrane. Residues 223–244 (LYKYASMGFTVLGVFLITKHVI) traverse the membrane as a helical segment. The Cytoplasmic segment spans residues 245–343 (DSVLERRRRR…IDLAVKTYRH (99 aa)). The RING-type zinc-finger motif lies at 296–331 (CVICLEQEYNAVFVPCGHMCCCTACSSHLTSCPLCR).

As to quaternary structure, interacts with TOC33, TOC75-3 and TOC159. Post-translationally, auto-ubiquitinated.

It is found in the plastid. It localises to the chloroplast outer membrane. It catalyses the reaction S-ubiquitinyl-[E2 ubiquitin-conjugating enzyme]-L-cysteine + [acceptor protein]-L-lysine = [E2 ubiquitin-conjugating enzyme]-L-cysteine + N(6)-ubiquitinyl-[acceptor protein]-L-lysine.. The protein operates within protein modification; protein ubiquitination. Its function is as follows. E3 ubiquitin-protein ligase involved in the regulation of protein import in the chloroplast. Associates with TOC complexes and mediates ubiquitination of TOC components, promoting their degradation via the ubiquitin-proteasome system (UPS). Plays a role in the reorganization of the TOC machinery. Involved in a mechanism that regulates plastid biogenesis via UPS. Promotes stress tolerance by depleting the chloroplast protein import apparatus, which limits photosystem assembly and the potential for reactive oxygen species (ROS) formation. May act as negative regulator of programmed cell death (PCD) during biotic stress. In Arabidopsis thaliana (Mouse-ear cress), this protein is E3 ubiquitin-protein ligase SP1.